The primary structure comprises 318 residues: Methionyl-tRNA formyltransferase (318 aa).

114–117 (SLLP) contacts (6S)-5,6,7,8-tetrahydrofolate.

Belongs to the Fmt family.

The enzyme catalyses L-methionyl-tRNA(fMet) + (6R)-10-formyltetrahydrofolate = N-formyl-L-methionyl-tRNA(fMet) + (6S)-5,6,7,8-tetrahydrofolate + H(+). Functionally, attaches a formyl group to the free amino group of methionyl-tRNA(fMet). The formyl group appears to play a dual role in the initiator identity of N-formylmethionyl-tRNA by promoting its recognition by IF2 and preventing the misappropriation of this tRNA by the elongation apparatus. The protein is Methionyl-tRNA formyltransferase of Protochlamydia amoebophila (strain UWE25).